Reading from the N-terminus, the 678-residue chain is Protein CASP (678 aa).

The Cytoplasmic portion of the chain corresponds to 1–619; sequence MAANVGSMFQ…LVLSNKMART (619 aa). Coiled-coil stretches lie at residues 67–450 and 502–556; these read LLKS…QDLS and LSII…FLQS. Ser586 is subject to Phosphoserine. Residues 620-640 form a helical; Anchor for type IV membrane protein membrane-spanning segment; sequence IGFFYTLFLHCLVFLVLYKLA. The Lumenal segment spans residues 641-678; that stretch reads WSESMERDCATFCAKKFADHLHKFHENDNGAAAGDLWQ.

Belongs to the CASP family. Homodimer; disulfide-linked. Interacts with GOLGA5.

The protein resides in the golgi apparatus membrane. Functionally, may be involved in intra-Golgi retrograde transport. The protein is Protein CASP (CUX1) of Homo sapiens (Human).